The primary structure comprises 248 residues: DNA repair protein RecO (248 aa).

Belongs to the RecO family.

Involved in DNA repair and RecF pathway recombination. This Bradyrhizobium sp. (strain ORS 278) protein is DNA repair protein RecO.